The primary structure comprises 116 residues: Large ribosomal subunit protein bL19 (116 aa).

It belongs to the bacterial ribosomal protein bL19 family.

Its function is as follows. This protein is located at the 30S-50S ribosomal subunit interface and may play a role in the structure and function of the aminoacyl-tRNA binding site. The polypeptide is Large ribosomal subunit protein bL19 (Azotobacter vinelandii (strain DJ / ATCC BAA-1303)).